A 173-amino-acid polypeptide reads, in one-letter code: NADH-ubiquinone oxidoreductase chain 6 (173 aa).

The next 5 helical transmembrane spans lie at 1–21, 27–47, 48–68, 87–107, and 139–159; these read MTYF…AVAS, YGVV…LSLG, VSFV…VVFV, VVGY…VGGF, and CGVG…FVVL.

It belongs to the complex I subunit 6 family.

Its subcellular location is the mitochondrion membrane. The enzyme catalyses a ubiquinone + NADH + 5 H(+)(in) = a ubiquinol + NAD(+) + 4 H(+)(out). Core subunit of the mitochondrial membrane respiratory chain NADH dehydrogenase (Complex I) that is believed to belong to the minimal assembly required for catalysis. Complex I functions in the transfer of electrons from NADH to the respiratory chain. The immediate electron acceptor for the enzyme is believed to be ubiquinone. This Aethia cristatella (Crested auklet) protein is NADH-ubiquinone oxidoreductase chain 6 (MT-ND6).